The primary structure comprises 256 residues: Type III pantothenate kinase (256 aa).

6-13 (DIGNTNIV) contacts ATP. A substrate-binding site is contributed by 107–110 (GADI). Catalysis depends on Asp-109, which acts as the Proton acceptor. Residue Asp-129 participates in K(+) binding. Thr-132 serves as a coordination point for ATP. Thr-184 contributes to the substrate binding site.

The protein belongs to the type III pantothenate kinase family. As to quaternary structure, homodimer. NH4(+) is required as a cofactor. The cofactor is K(+).

The protein localises to the cytoplasm. The enzyme catalyses (R)-pantothenate + ATP = (R)-4'-phosphopantothenate + ADP + H(+). It participates in cofactor biosynthesis; coenzyme A biosynthesis; CoA from (R)-pantothenate: step 1/5. Catalyzes the phosphorylation of pantothenate (Pan), the first step in CoA biosynthesis. In Bifidobacterium longum (strain DJO10A), this protein is Type III pantothenate kinase.